Reading from the N-terminus, the 148-residue chain is Nickel and cobalt resistance protein CnrR (148 aa).

A signal peptide spans 1-26 (MMKSRTRRLSLSTLFGALLGVSVAAA). The Periplasmic segment spans residues 28 to 148 (LYYSHRNEAG…LIDALRRGSQ (121 aa)). Residues 54-117 (NEREILELKE…AAGDLQRATL (64 aa)) adopt a coiled-coil conformation.

It to A.xylosoxydans NccX.

It is found in the periplasm. In terms of biological role, cnrH alone is able to activate cnr expression, while both CnrY and CrnR (CnrX) are needed for nickel induction of CnrH. Has been suggested to bind nickel. In Cupriavidus metallidurans (strain ATCC 43123 / DSM 2839 / NBRC 102507 / CH34) (Ralstonia metallidurans), this protein is Nickel and cobalt resistance protein CnrR (cnrR).